A 416-amino-acid polypeptide reads, in one-letter code: CinA-like protein (416 aa).

This sequence belongs to the CinA family.

This Nostoc punctiforme (strain ATCC 29133 / PCC 73102) protein is CinA-like protein.